Here is a 37-residue protein sequence, read N- to C-terminus: Defensin-A (37 aa).

Intrachain disulfides connect C4-C25, C10-C33, and C14-C35.

Its subcellular location is the secreted. Has antibacterial activity against M.luteus and E.coli. The protein is Defensin-A of Mytilus edulis (Blue mussel).